A 594-amino-acid polypeptide reads, in one-letter code: UvrABC system protein C (594 aa).

The region spanning 17 to 94 (LEPGCYLMKD…IKQYQPRYNI (78 aa)) is the GIY-YIG domain. In terms of domain architecture, UVR spans 199 to 234 (KTILNHLEERMNKASEQLDFEQAKEYRDMIQHIHNL).

The protein belongs to the UvrC family. As to quaternary structure, interacts with UvrB in an incision complex.

The protein localises to the cytoplasm. Functionally, the UvrABC repair system catalyzes the recognition and processing of DNA lesions. UvrC both incises the 5' and 3' sides of the lesion. The N-terminal half is responsible for the 3' incision and the C-terminal half is responsible for the 5' incision. This is UvrABC system protein C from Staphylococcus epidermidis (strain ATCC 35984 / DSM 28319 / BCRC 17069 / CCUG 31568 / BM 3577 / RP62A).